We begin with the raw amino-acid sequence, 222 residues long: Sugar fermentation stimulation protein homolog (222 aa).

Belongs to the SfsA family.

This chain is Sugar fermentation stimulation protein homolog, found in Thermotoga petrophila (strain ATCC BAA-488 / DSM 13995 / JCM 10881 / RKU-1).